Here is a 504-residue protein sequence, read N- to C-terminus: Arabinose import ATP-binding protein AraG (504 aa).

ABC transporter domains lie at 8–243 and 256–499; these read LSFR…MVGR and YGEE…MPKV. 40-47 contributes to the ATP binding site; that stretch reads GENGAGKS.

It belongs to the ABC transporter superfamily. Arabinose importer (TC 3.A.1.2.2) family. In terms of assembly, the complex is composed of two ATP-binding proteins (AraG), two transmembrane proteins (AraH) and a solute-binding protein (AraF).

Its subcellular location is the cell inner membrane. It carries out the reaction L-arabinose(out) + ATP + H2O = L-arabinose(in) + ADP + phosphate + H(+). In terms of biological role, part of the ABC transporter complex AraFGH involved in arabinose import. Responsible for energy coupling to the transport system. The polypeptide is Arabinose import ATP-binding protein AraG (Shigella boydii serotype 4 (strain Sb227)).